A 708-amino-acid chain; its full sequence is Ubiquitin thioesterase ZRANB1 (708 aa).

Residues 3-33 (ERGIKWACEYCTYENWPSAIKCTMCRAQRPS) form a RanBP2-type 1 zinc finger. Residues Cys10, Cys13, Cys24, and Cys27 each contribute to the Zn(2+) site. The segment at 38–73 (TEDPFKSGSSDVGRDWDPSSTEGGSSPLICPDSSAR) is disordered. RanBP2-type zinc fingers lie at residues 84–113 (NANKWSCHMCTYLNWPRAIRCTQCLSQRRT) and 149–178 (RTQHWTCSVCTYENWAKAKRCVVCDHPRPN). 8 residues coordinate Zn(2+): Cys90, Cys93, Cys104, Cys107, Cys155, Cys158, Cys169, and Cys172. The disordered stretch occupies residues 200 to 225 (RARWRGSCSSGNSQRRSPPATKRDSE). Polar residues predominate over residues 206 to 215 (SCSSGNSQRR). ANK repeat units follow at residues 260–290 (KKTDWLFLNACVGVVEGDLAAIEAYKSSGGD) and 313–340 (YTLVHLAIRFQRQDMLAILLTEVSQQAA). A TRAF-binding region spans residues 392–641 (PTVQEKLFDE…LSAQELGNEE (250 aa)). The OTU domain occupies 432–592 (LYALWNRTAG…RGHFSALVAM (161 aa)). Cys443 serves as the catalytic Nucleophile. The Proton acceptor role is filled by His585.

Belongs to the peptidase C64 family. Interacts with TRAF6. Interacts with APC. As to expression, widely expressed.

The protein resides in the cytoplasm. It is found in the nucleus. It carries out the reaction Thiol-dependent hydrolysis of ester, thioester, amide, peptide and isopeptide bonds formed by the C-terminal Gly of ubiquitin (a 76-residue protein attached to proteins as an intracellular targeting signal).. Its function is as follows. Ubiquitin thioesterase, which specifically hydrolyzes 'Lys-29'-linked and 'Lys-33'-linked diubiquitin. Also cleaves 'Lys-63'-linked chains, but with 40-fold less efficiency compared to 'Lys-29'-linked ones. Positive regulator of the Wnt signaling pathway that deubiquitinates APC protein, a negative regulator of Wnt-mediated transcription. Acts as a regulator of autophagy by mediating deubiquitination of PIK3C3/VPS34, thereby promoting autophagosome maturation. Plays a role in the regulation of cell morphology and cytoskeletal organization. Required in the stress fiber dynamics and cell migration. This chain is Ubiquitin thioesterase ZRANB1, found in Homo sapiens (Human).